Reading from the N-terminus, the 331-residue chain is Lipoyl synthase (331 aa).

The segment at 1 to 33 (MSDALIASSSEAPQSPAEQYDPTRKQKSADKTA) is disordered. Low complexity predominate over residues 7 to 19 (ASSSEAPQSPAEQ). Positions 21-33 (DPTRKQKSADKTA) are enriched in basic and acidic residues. Residues Cys78, Cys83, Cys89, Cys104, Cys108, Cys111, and Ser318 each coordinate [4Fe-4S] cluster. Positions 89–307 (CFGKGTATFM…EEEAYKMGFT (219 aa)) constitute a Radical SAM core domain.

The protein belongs to the radical SAM superfamily. Lipoyl synthase family. It depends on [4Fe-4S] cluster as a cofactor.

It is found in the cytoplasm. It carries out the reaction [[Fe-S] cluster scaffold protein carrying a second [4Fe-4S](2+) cluster] + N(6)-octanoyl-L-lysyl-[protein] + 2 oxidized [2Fe-2S]-[ferredoxin] + 2 S-adenosyl-L-methionine + 4 H(+) = [[Fe-S] cluster scaffold protein] + N(6)-[(R)-dihydrolipoyl]-L-lysyl-[protein] + 4 Fe(3+) + 2 hydrogen sulfide + 2 5'-deoxyadenosine + 2 L-methionine + 2 reduced [2Fe-2S]-[ferredoxin]. It participates in protein modification; protein lipoylation via endogenous pathway; protein N(6)-(lipoyl)lysine from octanoyl-[acyl-carrier-protein]: step 2/2. Functionally, catalyzes the radical-mediated insertion of two sulfur atoms into the C-6 and C-8 positions of the octanoyl moiety bound to the lipoyl domains of lipoate-dependent enzymes, thereby converting the octanoylated domains into lipoylated derivatives. The chain is Lipoyl synthase from Cupriavidus pinatubonensis (strain JMP 134 / LMG 1197) (Cupriavidus necator (strain JMP 134)).